Reading from the N-terminus, the 317-residue chain is Acetyl-coenzyme A carboxylase carboxyl transferase subunit alpha (317 aa).

The CoA carboxyltransferase C-terminal domain occupies 39-293 (RLESKAAAAL…EEAIAEGLAG (255 aa)).

The protein belongs to the AccA family. In terms of assembly, acetyl-CoA carboxylase is a heterohexamer composed of biotin carboxyl carrier protein (AccB), biotin carboxylase (AccC) and two subunits each of ACCase subunit alpha (AccA) and ACCase subunit beta (AccD).

The protein localises to the cytoplasm. It catalyses the reaction N(6)-carboxybiotinyl-L-lysyl-[protein] + acetyl-CoA = N(6)-biotinyl-L-lysyl-[protein] + malonyl-CoA. Its pathway is lipid metabolism; malonyl-CoA biosynthesis; malonyl-CoA from acetyl-CoA: step 1/1. Its function is as follows. Component of the acetyl coenzyme A carboxylase (ACC) complex. First, biotin carboxylase catalyzes the carboxylation of biotin on its carrier protein (BCCP) and then the CO(2) group is transferred by the carboxyltransferase to acetyl-CoA to form malonyl-CoA. This Methylobacterium sp. (strain 4-46) protein is Acetyl-coenzyme A carboxylase carboxyl transferase subunit alpha.